Reading from the N-terminus, the 348-residue chain is RNA 3'-terminal phosphate cyclase (348 aa).

ATP is bound by residues Q101 and 286-289 (HMAD). Catalysis depends on H312, which acts as the Tele-AMP-histidine intermediate.

It belongs to the RNA 3'-terminal cyclase family. Type 1 subfamily.

The protein resides in the cytoplasm. The catalysed reaction is a 3'-end 3'-phospho-ribonucleotide-RNA + ATP = a 3'-end 2',3'-cyclophospho-ribonucleotide-RNA + AMP + diphosphate. Functionally, catalyzes the conversion of 3'-phosphate to a 2',3'-cyclic phosphodiester at the end of RNA. The mechanism of action of the enzyme occurs in 3 steps: (A) adenylation of the enzyme by ATP; (B) transfer of adenylate to an RNA-N3'P to produce RNA-N3'PP5'A; (C) and attack of the adjacent 2'-hydroxyl on the 3'-phosphorus in the diester linkage to produce the cyclic end product. The biological role of this enzyme is unknown but it is likely to function in some aspects of cellular RNA processing. In Pyrobaculum aerophilum (strain ATCC 51768 / DSM 7523 / JCM 9630 / CIP 104966 / NBRC 100827 / IM2), this protein is RNA 3'-terminal phosphate cyclase.